A 22-amino-acid polypeptide reads, in one-letter code: NLFQFARMINKKLGAFXFXNYI.

This sequence belongs to the phospholipase A2 family. Group II subfamily. Ca(2+) is required as a cofactor. In terms of processing, seven disulfide bonds are present. As to expression, expressed by the venom gland.

The protein localises to the secreted. It carries out the reaction a 1,2-diacyl-sn-glycero-3-phosphocholine + H2O = a 1-acyl-sn-glycero-3-phosphocholine + a fatty acid + H(+). Functionally, snake venom phospholipase A2 (PLA2) that inhibits neuromuscular transmission by blocking acetylcholine release from the nerve termini. PLA2 catalyzes the calcium-dependent hydrolysis of the 2-acyl groups in 3-sn-phosphoglycerides. The chain is Phospholipase A2 from Daboia siamensis (Eastern Russel's viper).